Here is a 670-residue protein sequence, read N- to C-terminus: Transcription factor vib-1 (670 aa).

The segment at residues 106 to 341 (TEMVQDLRDD…RSPRNFQARK (236 aa)) is a DNA-binding region (NDT80). 2 stretches are compositionally biased toward polar residues: residues 394-438 (FTSA…TTSM) and 553-568 (LGNSSSDISPQSQHHP). Disordered stretches follow at residues 394–457 (FTSA…SYTA) and 496–670 (SAPP…WNAT). A compositionally biased stretch (low complexity) spans 592–605 (ASAPASAPTSAAPP). Residues 611–631 (PSQSWTSTAGEGQTSSYTNGG) are compositionally biased toward polar residues.

It localises to the nucleus. The protein resides in the cytoplasm. Functionally, transcription factor that acts as a positive regulator of nonrepressible acid phosphatase activity. Is a major regulator of responses to nitrogen and carbon starvation and is essential for the expression of genes involved in vegetative incompatibility (like pin-c, het-6, and tol). Vegetative incompatibility is a non-self-recognition system ubiquitous in filamentous fungi which results in programmed cell death. This is Transcription factor vib-1 (vib-1) from Neurospora crassa (strain ATCC 24698 / 74-OR23-1A / CBS 708.71 / DSM 1257 / FGSC 987).